Reading from the N-terminus, the 171-residue chain is Probable deoxyuridine 5'-triphosphate nucleotidohydrolase (171 aa).

The protein belongs to the dCTP deaminase family. Archaeal dUTPase subfamily.

It catalyses the reaction dUTP + H2O = dUMP + diphosphate + H(+). Its pathway is pyrimidine metabolism; dUMP biosynthesis; dUMP from dCTP (dUTP route): step 2/2. This enzyme is involved in nucleotide metabolism: it produces dUMP, the immediate precursor of thymidine nucleotides and it decreases the intracellular concentration of dUTP so that uracil cannot be incorporated into DNA. The protein is Probable deoxyuridine 5'-triphosphate nucleotidohydrolase of Methanosarcina mazei (strain ATCC BAA-159 / DSM 3647 / Goe1 / Go1 / JCM 11833 / OCM 88) (Methanosarcina frisia).